The following is a 374-amino-acid chain: Mannitol-1-phosphate 5-dehydrogenase (374 aa).

3-14 (AIHFGAGNIGRG) is a binding site for NAD(+).

It belongs to the mannitol dehydrogenase family.

It carries out the reaction D-mannitol 1-phosphate + NAD(+) = beta-D-fructose 6-phosphate + NADH + H(+). The chain is Mannitol-1-phosphate 5-dehydrogenase from Halalkalibacterium halodurans (strain ATCC BAA-125 / DSM 18197 / FERM 7344 / JCM 9153 / C-125) (Bacillus halodurans).